Here is a 279-residue protein sequence, read N- to C-terminus: Elongation factor Ts (279 aa).

Positions 80–83 (TDFV) are involved in Mg(2+) ion dislocation from EF-Tu.

Belongs to the EF-Ts family.

The protein localises to the cytoplasm. Associates with the EF-Tu.GDP complex and induces the exchange of GDP to GTP. It remains bound to the aminoacyl-tRNA.EF-Tu.GTP complex up to the GTP hydrolysis stage on the ribosome. This is Elongation factor Ts (tsf) from Borreliella burgdorferi (strain ATCC 35210 / DSM 4680 / CIP 102532 / B31) (Borrelia burgdorferi).